Consider the following 763-residue polypeptide: Phosphoglycerol transferase I (763 aa).

4 helical membrane-spanning segments follow: residues 1 to 21 (MSEL…AWKA), 26 to 46 (WWFA…ITLY), 77 to 97 (ILPG…LGWI), and 108 to 128 (VGYS…SPAF).

The protein belongs to the OpgB family.

The protein localises to the cell inner membrane. It carries out the reaction a phosphatidylglycerol + a membrane-derived-oligosaccharide D-glucose = a 1,2-diacyl-sn-glycerol + a membrane-derived-oligosaccharide 6-(glycerophospho)-D-glucose.. Its pathway is glycan metabolism; osmoregulated periplasmic glucan (OPG) biosynthesis. In terms of biological role, transfers a phosphoglycerol residue from phosphatidylglycerol to the membrane-bound nascent glucan backbones. The polypeptide is Phosphoglycerol transferase I (Salmonella agona (strain SL483)).